The chain runs to 426 residues: Histidine--tRNA ligase (426 aa).

This sequence belongs to the class-II aminoacyl-tRNA synthetase family.

Its subcellular location is the cytoplasm. The catalysed reaction is tRNA(His) + L-histidine + ATP = L-histidyl-tRNA(His) + AMP + diphosphate + H(+). In Saccharolobus islandicus (strain Y.G.57.14 / Yellowstone #1) (Sulfolobus islandicus), this protein is Histidine--tRNA ligase.